The following is a 210-amino-acid chain: Outer surface protein C (210 aa).

The first 18 residues, 1 to 18 (MKKNTLSAILMTLFLFIS), serve as a signal peptide directing secretion. A lipid anchor (N-palmitoyl cysteine) is attached at Cys-19. Residue Cys-19 is the site of S-diacylglycerol cysteine attachment.

Belongs to the OspC lipoprotein family. In terms of assembly, homodimer. Binds human plasminogen on the bacterial surface, also binds human plasmin. Interacts with tick I.ricinus salivary protein Iric-1. Interacts with human complement C4 beta chain (C4B); whole bacteria bind to wells coated with C4b. Binding is inhibited by human complement factor C2.

The protein localises to the cell outer membrane. Its subcellular location is the cell surface. A major immunodominant protein in mammalian hosts. Required for the initial stages of mammalian infection. Interaction with tick I.ricinus salivary protein Salp15 protects the bacteria from antibody-mediated killing in vitro and in vivo. Inhibits macrophage-mediated phagocytosis of the bacteria. Binds human plasminogen; this probably confers an extracellular protease activity on the bacteria that allows it to traverse tissue. Binds human complement C4-B, which may inhibit the complement cascade. Experiments in mice suggest it may play another role after initial infection. The protein is Outer surface protein C of Borreliella burgdorferi (strain ATCC 35210 / DSM 4680 / CIP 102532 / B31) (Borrelia burgdorferi).